We begin with the raw amino-acid sequence, 341 residues long: Holliday junction branch migration complex subunit RuvB (341 aa).

Residues 1–180 (MAKSHTLNPE…FGIQLRLDYY (180 aa)) form a large ATPase domain (RuvB-L) region. ATP is bound by residues leucine 19, arginine 20, glycine 61, lysine 64, threonine 65, threonine 66, arginine 170, tyrosine 180, and arginine 217. Residue threonine 65 coordinates Mg(2+). The small ATPAse domain (RuvB-S) stretch occupies residues 181-251 (NDEEMKQIVL…LCLKAFEKMG (71 aa)). Residues 254-341 (DLGLDGMDRQ…VHHGQDPTLF (88 aa)) are head domain (RuvB-H). DNA contacts are provided by arginine 309 and arginine 314.

The protein belongs to the RuvB family. In terms of assembly, homohexamer. Forms an RuvA(8)-RuvB(12)-Holliday junction (HJ) complex. HJ DNA is sandwiched between 2 RuvA tetramers; dsDNA enters through RuvA and exits via RuvB. An RuvB hexamer assembles on each DNA strand where it exits the tetramer. Each RuvB hexamer is contacted by two RuvA subunits (via domain III) on 2 adjacent RuvB subunits; this complex drives branch migration. In the full resolvosome a probable DNA-RuvA(4)-RuvB(12)-RuvC(2) complex forms which resolves the HJ.

The protein localises to the cytoplasm. The enzyme catalyses ATP + H2O = ADP + phosphate + H(+). Its function is as follows. The RuvA-RuvB-RuvC complex processes Holliday junction (HJ) DNA during genetic recombination and DNA repair, while the RuvA-RuvB complex plays an important role in the rescue of blocked DNA replication forks via replication fork reversal (RFR). RuvA specifically binds to HJ cruciform DNA, conferring on it an open structure. The RuvB hexamer acts as an ATP-dependent pump, pulling dsDNA into and through the RuvAB complex. RuvB forms 2 homohexamers on either side of HJ DNA bound by 1 or 2 RuvA tetramers; 4 subunits per hexamer contact DNA at a time. Coordinated motions by a converter formed by DNA-disengaged RuvB subunits stimulates ATP hydrolysis and nucleotide exchange. Immobilization of the converter enables RuvB to convert the ATP-contained energy into a lever motion, pulling 2 nucleotides of DNA out of the RuvA tetramer per ATP hydrolyzed, thus driving DNA branch migration. The RuvB motors rotate together with the DNA substrate, which together with the progressing nucleotide cycle form the mechanistic basis for DNA recombination by continuous HJ branch migration. Branch migration allows RuvC to scan DNA until it finds its consensus sequence, where it cleaves and resolves cruciform DNA. The protein is Holliday junction branch migration complex subunit RuvB of Leptospira interrogans serogroup Icterohaemorrhagiae serovar copenhageni (strain Fiocruz L1-130).